The chain runs to 843 residues: Complement component C7 (843 aa).

The N-terminal stretch at 1-22 (MKVISLFILVGFIGEFQSFSSA) is a signal peptide. The region spanning 27–80 (NCQWDFYAPWSECNGCTKTQTRRRSVAVYGQYGGQPCVGNAFETQSCEPTRGCP) is the TSP type-1 1 domain. Intrachain disulfides connect Cys-28–Cys-63, Cys-39–Cys-73, Cys-42–Cys-79, Cys-85–Cys-96, Cys-91–Cys-109, Cys-103–Cys-119, and Cys-128–Cys-165. Residue Trp-36 is glycosylated (C-linked (Man) tryptophan). In terms of domain architecture, LDL-receptor class A spans 83–121 (EGCGERFRCFSGQCISKSLVCNGDSDCDEDSADEDRCED). Positions 108 to 120 (DCDEDSADEDRCE) are enriched in acidic residues. Residues 108–143 (DCDEDSADEDRCEDSERRPSCDIDKPPPNIELTGNG) form a disordered region. Positions 121–132 (DSERRPSCDIDK) are enriched in basic and acidic residues. The 333-residue stretch at 124-456 (RRPSCDIDKP…EYLDEFDPCH (333 aa)) folds into the MACPF domain. Asn-202 is a glycosylation site (N-linked (GlcNAc...) asparagine). Residues 219–240 (SRKRSFFRSSSSSSRSYTSHTN) form a disordered region. Over residues 225-234 (FRSSSSSSRS) the composition is skewed to low complexity. 12 cysteine pairs are disulfide-bonded: Cys-337–Cys-353, Cys-433–Cys-560, Cys-455–Cys-505, Cys-457–Cys-473, Cys-460–Cys-475, Cys-477–Cys-486, Cys-512–Cys-545, Cys-523–Cys-535, Cys-571–Cys-613, Cys-599–Cys-626, Cys-631–Cys-673, and Cys-659–Cys-688. Positions 457 to 487 (CRPCQNGGLATVEGTHCLCHCKPYTFGAACE) constitute an EGF-like domain. Residues 500-549 (DGGWSCWSSWSPCVQGKKTRSRECNNPPPSGGGRSCVGETTESTQCEDEE) form the TSP type-1 2 domain. Trp-503, Trp-506, and Trp-509 each carry a C-linked (Man) tryptophan; partial glycan. The interval 516-538 (KKTRSRECNNPPPSGGGRSCVGE) is disordered. CCP stretches follow at residues 545–615 (CEDE…RCGE) and 616–693 (DLRW…QKEN). Sushi domains follow at residues 569–628 (EFCP…HCQK) and 629–690 (IACV…RCVQ). Factor I module (FIM) stretches follow at residues 695–770 (LTQA…ASAE) and 771–843 (KACG…AETQ). Residue Thr-696 is glycosylated (O-linked (GalNAc...) threonine). 9 cysteine pairs are disulfide-bonded: Cys-702-Cys-713, Cys-715-Cys-750, Cys-721-Cys-743, Cys-728-Cys-763, Cys-773-Cys-782, Cys-776-Cys-789, Cys-791-Cys-825, Cys-797-Cys-818, and Cys-805-Cys-838. Asn-754 carries an N-linked (GlcNAc...) (complex) asparagine glycan.

Belongs to the complement C6/C7/C8/C9 family. Monomer or dimer; as a C5b-7 complex it can also form multimeric rosettes. Component of the membrane attack complex (MAC), composed of complement C5b, C6, C7, C8A, C8B, C8G and multiple copies of the pore-forming subunit C9. C-, N- and O-glycosylated. O-glycosylated with core 1 or possibly core 8 glycans.

It is found in the secreted. Its subcellular location is the target cell membrane. With respect to regulation, membrane attack complex (MAC) assembly is inhibited by CD59, thereby protecting self-cells from damage during complement activation. MAC assembly is also inhibited by clusterin (CLU) chaperones that inhibit polymerization of C9. Component of the membrane attack complex (MAC), a multiprotein complex activated by the complement cascade, which inserts into a target cell membrane and forms a pore, leading to target cell membrane rupture and cell lysis. The MAC is initiated by proteolytic cleavage of C5 into complement C5b in response to the classical, alternative, lectin and GZMK complement pathways. The complement pathways consist in a cascade of proteins that leads to phagocytosis and breakdown of pathogens and signaling that strengthens the adaptive immune system. C7 serves as a membrane anchor. During MAC assembly, associates with C5b and C6 to form the C5b-7 complex, a key lipophilic precursor of the MAC complex, which associates with the outer leaflet and reduces the energy for membrane bending. The chain is Complement component C7 from Homo sapiens (Human).